A 266-amino-acid polypeptide reads, in one-letter code: Apolipoprotein A-I (266 aa).

Positions 1–18 (MKAALLTLAVLFLTGSQA) are cleaved as a signal peptide. Repeat copies occupy residues 67-88 (LKLL…EQIG) and 89-110 (PVTQ…QEMS). The segment at 67-266 (LKLLDNWDSL…DEATKKLNAQ (200 aa)) is 10 X approximate tandem repeats. The residue at position 109 (M109) is a Methionine sulfoxide. The 3; half-length repeat unit spans residues 111–121 (KDLEEVKQKVQ). Repeat copies occupy residues 122 to 143 (PYLD…QKVA), 144 to 165 (PLGS…EKLS), 166 to 187 (PLAE…AQLA), 188 to 209 (PYSD…EGGG), and 210 to 231 (ASLA…EKAR). A 9; half-length repeat occupies 232 to 242 (PALEDLRQGLL). The stretch at 243–266 (PVLESFKVSLLAAIDEATKKLNAQ) is repeat 10.

It belongs to the apolipoprotein A1/A4/E family. In terms of assembly, homodimer. Interacts with APOA1BP and CLU. Component of a sperm activating protein complex (SPAP), consisting of APOA1, an immunoglobulin heavy chain, an immunoglobulin light chain and albumin. Interacts with NDRG1. Interacts with SCGB3A2. Interacts with NAXE and YJEFN3. Post-translationally, palmitoylated. In terms of processing, glycosylated. Phosphorylation sites are present in the extracellular medium. Major protein of plasma HDL, also found in chylomicrons. Synthesized in the liver and small intestine.

Its subcellular location is the secreted. In terms of biological role, participates in the reverse transport of cholesterol from tissues to the liver for excretion by promoting cholesterol efflux from tissues and by acting as a cofactor for the lecithin cholesterol acyltransferase (LCAT). As part of the SPAP complex, activates spermatozoa motility. This Canis lupus familiaris (Dog) protein is Apolipoprotein A-I (APOA1).